The primary structure comprises 315 residues: Protein SHORT INTERNODES 1 (315 aa).

Residues 1 to 10 (MAGFPLGGGS) show a composition bias toward gly residues. 2 disordered regions span residues 1–24 (MAGF…PPVH) and 64–92 (PPAP…GGGG). The span at 70-82 (AGASSSSSSRGMR) shows a compositional bias: low complexity. Over residues 83–92 (SSGGGGGGGG) the composition is skewed to gly residues. Zn(2+) contacts are provided by C97, C100, C108, C113, C117, and C124. The segment at residues 97–124 (CQDCGNQAKKDCTHMRCRTCCKSRGFAC) is a DNA-binding region (zn(2)-C6 fungal-type; degenerate). 2 stretches are compositionally biased toward low complexity: residues 143–156 (QQLA…AATA) and 172–182 (RPSATTPTTSS). A disordered region spans residues 143–186 (QQLAALAASAAATAGGAGPSRDPTKRPRARPSATTPTTSSGDQQ). Residues 227–230 (IGGH) carry the Required for homo- and heterodimerization motif.

This sequence belongs to the SHI protein family. Forms homodimers (via C-terminus). Interacts with SPL14/IPA1 (via C-terminus). Predominantly expressed in axillary buds and young panicles.

Its subcellular location is the nucleus. Its function is as follows. Regulates tillering and panicle branching by modulating SPL14/IPA1 transcriptional activity on the downstream TB1 and DEP1 target genes. Binds directly to the 5'-T/GCTCTAC-3' DNA motif found in the promoter regions of both TB1 and DEP1. Represses the DNA binding activity of SPL14/IPA1 toward the promoters of both TB1 and DEP1. Exhibits weak transcriptional activation activity in yeast cells. In Oryza sativa subsp. japonica (Rice), this protein is Protein SHORT INTERNODES 1.